A 118-amino-acid chain; its full sequence is Putative pterin-4-alpha-carbinolamine dehydratase (118 aa).

Belongs to the pterin-4-alpha-carbinolamine dehydratase family.

It carries out the reaction (4aS,6R)-4a-hydroxy-L-erythro-5,6,7,8-tetrahydrobiopterin = (6R)-L-erythro-6,7-dihydrobiopterin + H2O. The sequence is that of Putative pterin-4-alpha-carbinolamine dehydratase from Pseudomonas putida (strain ATCC 700007 / DSM 6899 / JCM 31910 / BCRC 17059 / LMG 24140 / F1).